Reading from the N-terminus, the 681-residue chain is Transmembrane protein 214-A (681 aa).

2 disordered regions span residues 1 to 41 and 58 to 99; these read MASG…GTAP and KKQN…GSRQ. Asn300 and Asn324 each carry an N-linked (GlcNAc...) asparagine glycan. Helical transmembrane passes span 471-491 and 608-628; these read GFPW…FVFY and LLLH…EAAV.

Belongs to the TMEM214 family. Constitutively interacts with CASP4; required for the localization of procaspase 4 to the ER.

The protein localises to the endoplasmic reticulum membrane. In terms of biological role, critical mediator, in cooperation with CASP4, of endoplasmic reticulum-stress induced apoptosis. Required or the activation of CASP4 following endoplasmic reticulum stress. This Xenopus laevis (African clawed frog) protein is Transmembrane protein 214-A (tmem214-a).